Reading from the N-terminus, the 259-residue chain is Small ribosomal subunit protein eS1 (259 aa).

This sequence belongs to the eukaryotic ribosomal protein eS1 family. As to quaternary structure, component of the small ribosomal subunit. Mature ribosomes consist of a small (40S) and a large (60S) subunit. The 40S subunit contains about 33 different proteins and 1 molecule of RNA (18S). The 60S subunit contains about 49 different proteins and 3 molecules of RNA (25S, 5.8S and 5S).

Its subcellular location is the cytoplasm. The protein is Small ribosomal subunit protein eS1 of Monosiga brevicollis (Choanoflagellate).